The following is a 103-amino-acid chain: UPF0473 protein SGO_2040 (103 aa).

It belongs to the UPF0473 family.

The protein is UPF0473 protein SGO_2040 of Streptococcus gordonii (strain Challis / ATCC 35105 / BCRC 15272 / CH1 / DL1 / V288).